The chain runs to 118 residues: Large ribosomal subunit protein bL17 (118 aa).

The protein belongs to the bacterial ribosomal protein bL17 family. As to quaternary structure, part of the 50S ribosomal subunit. Contacts protein L32.

The sequence is that of Large ribosomal subunit protein bL17 from Phytoplasma mali (strain AT).